A 562-amino-acid polypeptide reads, in one-letter code: NAD-dependent malic enzyme (562 aa).

Tyr101 serves as the catalytic Proton donor. Arg154 lines the NAD(+) pocket. Residue Lys172 is the Proton acceptor of the active site. A divalent metal cation is bound by residues Glu243, Asp244, and Asp267. Asp267 and Asn415 together coordinate NAD(+).

The protein belongs to the malic enzymes family. In terms of assembly, homotetramer. It depends on Mg(2+) as a cofactor. Mn(2+) is required as a cofactor.

The catalysed reaction is (S)-malate + NAD(+) = pyruvate + CO2 + NADH. The enzyme catalyses oxaloacetate + H(+) = pyruvate + CO2. The sequence is that of NAD-dependent malic enzyme from Aliivibrio salmonicida (strain LFI1238) (Vibrio salmonicida (strain LFI1238)).